Reading from the N-terminus, the 204-residue chain is LexA repressor (204 aa).

The segment at residues 29–49 (VREIGDAVGLMSSSTVHGHLQ) is a DNA-binding region (H-T-H motif). Active-site for autocatalytic cleavage activity residues include Ser127 and Lys164.

This sequence belongs to the peptidase S24 family. As to quaternary structure, homodimer.

The enzyme catalyses Hydrolysis of Ala-|-Gly bond in repressor LexA.. In terms of biological role, represses a number of genes involved in the response to DNA damage (SOS response), including recA and lexA. In the presence of single-stranded DNA, RecA interacts with LexA causing an autocatalytic cleavage which disrupts the DNA-binding part of LexA, leading to derepression of the SOS regulon and eventually DNA repair. The chain is LexA repressor from Desulfitobacterium hafniense (strain DSM 10664 / DCB-2).